We begin with the raw amino-acid sequence, 292 residues long: 4-hydroxy-tetrahydrodipicolinate synthase (292 aa).

Thr-45 is a binding site for pyruvate. Tyr-133 serves as the catalytic Proton donor/acceptor. Lys-161 functions as the Schiff-base intermediate with substrate in the catalytic mechanism. Ile-203 serves as a coordination point for pyruvate.

The protein belongs to the DapA family. Homotetramer; dimer of dimers.

The protein localises to the cytoplasm. The enzyme catalyses L-aspartate 4-semialdehyde + pyruvate = (2S,4S)-4-hydroxy-2,3,4,5-tetrahydrodipicolinate + H2O + H(+). It participates in amino-acid biosynthesis; L-lysine biosynthesis via DAP pathway; (S)-tetrahydrodipicolinate from L-aspartate: step 3/4. Functionally, catalyzes the condensation of (S)-aspartate-beta-semialdehyde [(S)-ASA] and pyruvate to 4-hydroxy-tetrahydrodipicolinate (HTPA). This is 4-hydroxy-tetrahydrodipicolinate synthase from Erwinia tasmaniensis (strain DSM 17950 / CFBP 7177 / CIP 109463 / NCPPB 4357 / Et1/99).